Reading from the N-terminus, the 167-residue chain is UPF0179 protein PAE0681 (167 aa).

Positions P142–K167 are disordered. Residues S145–S157 show a composition bias toward low complexity.

The protein belongs to the UPF0179 family.

The chain is UPF0179 protein PAE0681 from Pyrobaculum aerophilum (strain ATCC 51768 / DSM 7523 / JCM 9630 / CIP 104966 / NBRC 100827 / IM2).